The sequence spans 549 residues: Glucose-6-phosphate isomerase (549 aa).

3 positions are modified to N6-acetyllysine: K80, K228, and K234. E355 (proton donor) is an active-site residue. Catalysis depends on residues H386 and K514.

This sequence belongs to the GPI family.

Its subcellular location is the cytoplasm. The catalysed reaction is alpha-D-glucose 6-phosphate = beta-D-fructose 6-phosphate. It functions in the pathway carbohydrate biosynthesis; gluconeogenesis. The protein operates within carbohydrate degradation; glycolysis; D-glyceraldehyde 3-phosphate and glycerone phosphate from D-glucose: step 2/4. Catalyzes the reversible isomerization of glucose-6-phosphate to fructose-6-phosphate. This is Glucose-6-phosphate isomerase from Escherichia coli (strain SMS-3-5 / SECEC).